The sequence spans 1085 residues: MEASTTTVKARSTHYICGHAGDSFVKIIYYKDKVKAVVSYLNMNDYLNTYALKCVIPEKITKDFFSSCPDDLLYSTLASIQRGYSPKKKEELGGKWEPLLLLYHRGEEYIIRAVVPQRRCEDCGKQFVSSHQCNVRRREFYHHAVLPDTKTWWKPIKFSPIGALSNAKRLFIIYDIETYTFHSGYGKQLVPYLLVMQFKGDSRLRCEAEKIALECGFQPYRQCFMMLNKARDVIGHKFKDMRVQLQKRAASDIWSRYREKHDILSEEGVSYAQLEAMAKDNLLKTDAEPEFTEIIVVGHNITGFDEIVLASHVLEGLPKDEELQMFKITRNFMPRAGKLLFNDVIMALPNAAFQKPKQSTFQRWKTGDLRPEDLKWEGVRFMVRDTVLLTHSSLRNAAQAYQLEVSKGHCPYDALNQYFMVGTYLCDENMYPAREYWSSDEEYLENKPPDGEKYDLVQKAVDYCVNDVKVTVALVKKLCSGYQQFCDEVLKLDCTFNVFQRPTISSTTHAMFKQMFYKSEPSAVGKFLPNLEAPSEVMYEHIRKSVRGGRCYPSFLGVFTEPHLCYDICGMYASALSHPMPYGPTLSPFDSAVAIAEFQRKLDGQSELSYFDPDIFPMIVVADAFPPSLHCLDVLPPLCSKRSGKLCWTNEPLLGEVLTTVDLIMLKNRGWRVKLIQNAECYAVWREWRPLCREYVSINIAAKEKADREKNQTQRSISKLLSNALYGSFATRLDNKQVVFMDDMSSTTQSELRSGKASIVSMTSVCSRSLPQKDTSFWERYFNLPQVEDSISAELNDEPETEPFIGGERSHVIYKPITFLSAECDNLLLATVQSNSDWVKNDRYATQVASFVLAWSRAFMSEWATILYGEDIGVPYEQRKLKSVYGDTDSLFLTGEGHRLMITKGRHKLKSSGNSLVYRDDGNLAWLVECETSCPSCKSDSFSSESCFLAPKLYALKDTTCPSCGLVSGGKLRAKGHAKSCITYDVLKSCFLDHYLLERPTEQYQSERTPIKRTLANGSANSAPFTVVEKQLARVIRPWNDPTMARGTDLSQGFLLFPYDQKRPNPRPQEPLLENPFWDDSSQTA.

The disordered stretch occupies residues 1059 to 1085; it reads YDQKRPNPRPQEPLLENPFWDDSSQTA.

It belongs to the DNA polymerase type-B family. In terms of assembly, heterodimer with the terminal protein; this heterodimer binds to bp 9 to 18 of the genome. Forms a complex with viral pTP, DBP and hosts NFIA and POU2F1/OCT1 for initiation of replication.

It is found in the host nucleus. It carries out the reaction DNA(n) + a 2'-deoxyribonucleoside 5'-triphosphate = DNA(n+1) + diphosphate. Its function is as follows. Eukaryotic-type DNA polymerase involved in viral genomic replication. DNA synthesis is protein primed, and acts in a strand displacement replication. Functionally, eukaryotic-type DNA polymerase involved in viral genomic replication. DNA synthesis is protein primed, and acts in a strand displacement replication. Assembles in complex with viral pTP, DBP, host NFIA and host POU2F1/OCT1 on viral origin of replication. The polymerase covalently transfers dCMP onto pTP, thereby initiating complementary strand synthesis. The protein is DNA polymerase of Pantherophis guttatus (Corn snake).